A 532-amino-acid chain; its full sequence is Metal-staphylopine-binding protein CntA (532 aa).

Positions 1–20 (MRKLTKMSAMLLASGLILTG) are cleaved as a signal peptide. C21 carries the N-palmitoyl cysteine lipid modification. The S-diacylglycerol cysteine moiety is linked to residue C21. Residues R165, R418, and N448 each contribute to the staphylopine site.

This sequence belongs to the bacterial solute-binding protein 5 family. In terms of assembly, the complex is composed of two ATP-binding proteins (CntD and CntF), two transmembrane proteins (CntB and CntC) and a solute-binding protein (CntA).

The protein localises to the cell membrane. Its activity is regulated as follows. Nickel/cobalt import is reduced in the presence of zinc. In terms of biological role, part of the ABC transporter complex CntABCDF (Opp1) involved in the uptake of metal in complex with the metallophore staphylopine (StP). Involved in the import of divalent metals ions such as nickel, cobalt and zinc. Binds the metal via the metallophore StP, and transfers the StP-metal complex to the membrane-bound permease. Binds one molecule of StP/metal. Binds StP/Co(2+) and StP/Ni(2+) tighter than StP/Zn(2+). Plays a major role in nickel/cobalt import in zinc-depleted conditions. Contributes to virulence. Required for full urease activity in vitro. In Staphylococcus aureus (strain NCTC 8325 / PS 47), this protein is Metal-staphylopine-binding protein CntA.